We begin with the raw amino-acid sequence, 253 residues long: Ubiquinone/menaquinone biosynthesis C-methyltransferase UbiE (253 aa).

S-adenosyl-L-methionine is bound by residues T76, D97, and 125–126 (DA).

The protein belongs to the class I-like SAM-binding methyltransferase superfamily. MenG/UbiE family.

The enzyme catalyses a 2-demethylmenaquinol + S-adenosyl-L-methionine = a menaquinol + S-adenosyl-L-homocysteine + H(+). It carries out the reaction a 2-methoxy-6-(all-trans-polyprenyl)benzene-1,4-diol + S-adenosyl-L-methionine = a 5-methoxy-2-methyl-3-(all-trans-polyprenyl)benzene-1,4-diol + S-adenosyl-L-homocysteine + H(+). It participates in quinol/quinone metabolism; menaquinone biosynthesis; menaquinol from 1,4-dihydroxy-2-naphthoate: step 2/2. It functions in the pathway cofactor biosynthesis; ubiquinone biosynthesis. Its function is as follows. Methyltransferase required for the conversion of demethylmenaquinol (DMKH2) to menaquinol (MKH2) and the conversion of 2-polyprenyl-6-methoxy-1,4-benzoquinol (DDMQH2) to 2-polyprenyl-3-methyl-6-methoxy-1,4-benzoquinol (DMQH2). The protein is Ubiquinone/menaquinone biosynthesis C-methyltransferase UbiE of Azotobacter vinelandii (strain DJ / ATCC BAA-1303).